A 524-amino-acid chain; its full sequence is Bifunctional purine biosynthesis protein PurH (524 aa).

The MGS-like domain occupies 1 to 149 (MSDPLIKRAL…KNNESVTVLT (149 aa)).

The protein belongs to the PurH family.

The catalysed reaction is (6R)-10-formyltetrahydrofolate + 5-amino-1-(5-phospho-beta-D-ribosyl)imidazole-4-carboxamide = 5-formamido-1-(5-phospho-D-ribosyl)imidazole-4-carboxamide + (6S)-5,6,7,8-tetrahydrofolate. It catalyses the reaction IMP + H2O = 5-formamido-1-(5-phospho-D-ribosyl)imidazole-4-carboxamide. The protein operates within purine metabolism; IMP biosynthesis via de novo pathway; 5-formamido-1-(5-phospho-D-ribosyl)imidazole-4-carboxamide from 5-amino-1-(5-phospho-D-ribosyl)imidazole-4-carboxamide (10-formyl THF route): step 1/1. It participates in purine metabolism; IMP biosynthesis via de novo pathway; IMP from 5-formamido-1-(5-phospho-D-ribosyl)imidazole-4-carboxamide: step 1/1. The sequence is that of Bifunctional purine biosynthesis protein PurH from Chlorobium phaeovibrioides (strain DSM 265 / 1930) (Prosthecochloris vibrioformis (strain DSM 265)).